The sequence spans 70 residues: Beta-defensin 107A (70 aa).

Residues 1–26 form the signal peptide; it reads MPGAMKIFFFIFAALILLAQIFQART. Cystine bridges form between cysteine 41–cysteine 55 and cysteine 45–cysteine 64.

The protein belongs to the beta-defensin family.

It is found in the secreted. Functionally, has antibacterial activity. This Pan troglodytes (Chimpanzee) protein is Beta-defensin 107A (DEFB107A).